Reading from the N-terminus, the 355-residue chain is S-adenosylmethionine:tRNA ribosyltransferase-isomerase (355 aa).

Belongs to the QueA family. As to quaternary structure, monomer.

The protein localises to the cytoplasm. The enzyme catalyses 7-aminomethyl-7-carbaguanosine(34) in tRNA + S-adenosyl-L-methionine = epoxyqueuosine(34) in tRNA + adenine + L-methionine + 2 H(+). The protein operates within tRNA modification; tRNA-queuosine biosynthesis. In terms of biological role, transfers and isomerizes the ribose moiety from AdoMet to the 7-aminomethyl group of 7-deazaguanine (preQ1-tRNA) to give epoxyqueuosine (oQ-tRNA). The protein is S-adenosylmethionine:tRNA ribosyltransferase-isomerase of Burkholderia orbicola (strain AU 1054).